Reading from the N-terminus, the 159-residue chain is Globin-like protein (159 aa).

One can recognise a Globin domain in the interval 1–152 (MSMNRQEISD…FNAESQTHLK (152 aa)). His-101 is a binding site for heme.

Belongs to the globin family. As to quaternary structure, homodimer. In terms of tissue distribution, expressed mainly in a subset of neuronal cells and in head muscular tissue.

The protein resides in the cytoplasm. Its function is as follows. May be a globin and may play a role in oxygen transport. The protein is Globin-like protein (glb-1) of Caenorhabditis elegans.